A 245-amino-acid chain; its full sequence is MALIEGVGDEVTVLFAVLACLLVLALAWVSTHTTESTDPQPQPPGTTTPAQPSEAMSASDSIREEAPGAESPSLRHRGPSAQPEPDTGVTASTPPDSPQEPLLLRLKFLNDSEQVARAWPQDTIGSLKRTQFPGQEQQVRLIYQGQLLGDDTQTLGSLHLPPNCVLHCHVSTRVGPPHPPCPPGSEPGPSGLEIGSLLLPLLLLLLLLLWYCQIQYRPFFPLTATLGLAGFTLLLSLLAFAMYRP.

Positions 2–30 are required to release iHOPS from membranes; it reads ALIEGVGDEVTVLFAVLACLLVLALAWVS. The helical transmembrane segment at 11–31 threads the bilayer; sequence VTVLFAVLACLLVLALAWVST. The disordered stretch occupies residues 33 to 100; that stretch reads TTESTDPQPQ…ASTPPDSPQE (68 aa). Phosphoserine is present on residues serine 73, serine 97, and serine 126. Residues 102–175 enclose the Ubiquitin-like domain; that stretch reads LLLRLKFLND…LHCHVSTRVG (74 aa). 2 consecutive transmembrane segments (helical) span residues 194–214 and 219–239; these read IGSL…YCQI and FFPL…SLLA.

As to quaternary structure, interacts with EEF1A1, CAMLG, GRIA2 and GRIP1. Interacts with NPM1 and CDKN2A; TMUB1 can enhance interaction between NPM1 and CDKN2A and is proposed to bridge the proteins; proposed to be mediated by iHOPS. Interacts with TUBG1. Interacts with ERLIN2 and AMFR; TMUB1 promotes the interaction of ERLIN2 with AMFR. Post-translationally, isoform 1 (lHOPS) is processed by regulated intramembrane proteolysis (RIP) in the N-terminus to release iHOPS from membranes. In terms of processing, isoform 2 seems to undergo a selective cleavage in the C-terminal region to release an additional cytoplasmic form. Expressed in adult brain; at protein level. Isoform 1 (lHOPS) is highly expressed in small intestine, stomach and epididymis. Isoform 2 (sHOPS) and iHOPS are abundantly expressed in brain, liver and adrenal gland.

It localises to the membrane. The protein localises to the postsynaptic cell membrane. Its subcellular location is the recycling endosome. The protein resides in the cytoplasm. It is found in the nucleus. It localises to the nucleolus. The protein localises to the cytoskeleton. Its subcellular location is the microtubule organizing center. The protein resides in the centrosome. In terms of biological role, involved in sterol-regulated ubiquitination and degradation of HMG-CoA reductase HMGCR. Involved in positive regulation of AMPA-selective glutamate receptor GRIA2 recycling to the cell surface. Acts as a negative regulator of hepatocyte growth during regeneration. May contribute to the regulation of translation during cell-cycle progression. May contribute to the regulation of cell proliferation. May be involved in centrosome assembly. Modulates stabilization and nucleolar localization of tumor suppressor CDKN2A and enhances association between CDKN2A and NPM1. The sequence is that of Transmembrane and ubiquitin-like domain-containing protein 1 (Tmub1) from Mus musculus (Mouse).